The sequence spans 149 residues: MPRLAMNVQYASEWDSLPNEKQFRKWARAALRVDTEATLRIVDEEEGRMLNRDYRGKDYATNVLTFPLEEEPWLVGDIILCAPVVAREAAEQNITLESHYAHLTVHGILHMHGYDHEDEHQAELMESIESFTMIQLGYPDPYSSEKRKR.

Zn(2+)-binding residues include His106, His110, and His116.

It belongs to the endoribonuclease YbeY family. It depends on Zn(2+) as a cofactor.

The protein resides in the cytoplasm. Its function is as follows. Single strand-specific metallo-endoribonuclease involved in late-stage 70S ribosome quality control and in maturation of the 3' terminus of the 16S rRNA. This chain is Endoribonuclease YbeY, found in Methylobacillus flagellatus (strain ATCC 51484 / DSM 6875 / VKM B-1610 / KT).